The primary structure comprises 110 residues: Ribonuclease H2 subunit C (110 aa).

The tract at residues 45–69 (LKREKSATPSSSDNTTSNTFSNGAI) is disordered. The span at 51 to 66 (ATPSSSDNTTSNTFSN) shows a compositional bias: low complexity.

The protein belongs to the RNase H2 subunit C family. Highly divergent. As to quaternary structure, the RNase 2 complex is a heterotrimer composed of the catalytic subunit RNH201 and of the non-catalytic subunits RNH202 and RNH203.

It localises to the cytoplasm. The protein localises to the nucleus. In terms of biological role, non catalytic subunit of RNase H2, an endonuclease that specifically degrades the RNA of RNA:DNA hybrids. Participates in DNA replication, possibly by mediating the removal of lagging-strand Okazaki fragment RNA primers during DNA replication. Mediates the excision of single ribonucleotides from DNA:RNA duplexes. The chain is Ribonuclease H2 subunit C (RNH203) from Saccharomyces cerevisiae (strain ATCC 204508 / S288c) (Baker's yeast).